Consider the following 179-residue polypeptide: Large ribosomal subunit protein uL6 (179 aa).

It belongs to the universal ribosomal protein uL6 family. In terms of assembly, part of the 50S ribosomal subunit.

Its function is as follows. This protein binds to the 23S rRNA, and is important in its secondary structure. It is located near the subunit interface in the base of the L7/L12 stalk, and near the tRNA binding site of the peptidyltransferase center. The polypeptide is Large ribosomal subunit protein uL6 (Pseudomonas savastanoi pv. phaseolicola (strain 1448A / Race 6) (Pseudomonas syringae pv. phaseolicola (strain 1448A / Race 6))).